The sequence spans 295 residues: Glycine--tRNA ligase alpha subunit (295 aa).

Belongs to the class-II aminoacyl-tRNA synthetase family. As to quaternary structure, tetramer of two alpha and two beta subunits.

Its subcellular location is the cytoplasm. It catalyses the reaction tRNA(Gly) + glycine + ATP = glycyl-tRNA(Gly) + AMP + diphosphate. This chain is Glycine--tRNA ligase alpha subunit, found in Shouchella clausii (strain KSM-K16) (Alkalihalobacillus clausii).